The chain runs to 236 residues: Proteasome subunit beta type-1 (236 aa).

Belongs to the peptidase T1B family. In terms of assembly, the 26S proteasome consists of a 20S proteasome core and two 19S regulatory subunits. The 20S proteasome core is composed of 28 subunits that are arranged in four stacked rings, resulting in a barrel-shaped structure. The two end rings are each formed by seven alpha subunits, and the two central rings are each formed by seven beta subunits. The catalytic chamber with the active sites is on the inside of the barrel.

The protein resides in the cytoplasm. It is found in the nucleus. Non-catalytic component of the proteasome, a multicatalytic proteinase complex which is characterized by its ability to cleave peptides with Arg, Phe, Tyr, Leu, and Glu adjacent to the leaving group at neutral or slightly basic pH. The proteasome has an ATP-dependent proteolytic activity. The polypeptide is Proteasome subunit beta type-1 (psmB1) (Dictyostelium discoideum (Social amoeba)).